The primary structure comprises 67 residues: uncharacterized protein (67 aa).

Helical transmembrane passes span 8–28 and 41–61; these read MWFA…IYLS and ISSF…VVVF.

The protein localises to the cell membrane. This is an uncharacterized protein from Bacillus subtilis (strain 168).